The following is a 548-amino-acid chain: ATP synthase subunit alpha (548 aa).

Gly172–Thr179 is a binding site for ATP. Residues Gln510–Lys548 are disordered. Low complexity predominate over residues Ser514–Ala531.

The protein belongs to the ATPase alpha/beta chains family. As to quaternary structure, F-type ATPases have 2 components, CF(1) - the catalytic core - and CF(0) - the membrane proton channel. CF(1) has five subunits: alpha(3), beta(3), gamma(1), delta(1), epsilon(1). CF(0) has three main subunits: a(1), b(2) and c(9-12). The alpha and beta chains form an alternating ring which encloses part of the gamma chain. CF(1) is attached to CF(0) by a central stalk formed by the gamma and epsilon chains, while a peripheral stalk is formed by the delta and b chains.

The protein resides in the cell membrane. It catalyses the reaction ATP + H2O + 4 H(+)(in) = ADP + phosphate + 5 H(+)(out). Functionally, produces ATP from ADP in the presence of a proton gradient across the membrane. The alpha chain is a regulatory subunit. The sequence is that of ATP synthase subunit alpha from Saccharopolyspora erythraea (strain ATCC 11635 / DSM 40517 / JCM 4748 / NBRC 13426 / NCIMB 8594 / NRRL 2338).